The primary structure comprises 203 residues: Guanylate kinase (203 aa).

Residues 4–183 (GKLFVISAPS…ASTLLKSIIW (180 aa)) enclose the Guanylate kinase-like domain. 11–18 (APSGAGKT) lines the ATP pocket.

It belongs to the guanylate kinase family.

Its subcellular location is the cytoplasm. It catalyses the reaction GMP + ATP = GDP + ADP. Functionally, essential for recycling GMP and indirectly, cGMP. The protein is Guanylate kinase of Desulfotalea psychrophila (strain LSv54 / DSM 12343).